We begin with the raw amino-acid sequence, 471 residues long: ATP synthase subunit beta (471 aa).

154-161 (GGAGVGKT) lines the ATP pocket.

This sequence belongs to the ATPase alpha/beta chains family. F-type ATPases have 2 components, CF(1) - the catalytic core - and CF(0) - the membrane proton channel. CF(1) has five subunits: alpha(3), beta(3), gamma(1), delta(1), epsilon(1). CF(0) has three main subunits: a(1), b(2) and c(9-12). The alpha and beta chains form an alternating ring which encloses part of the gamma chain. CF(1) is attached to CF(0) by a central stalk formed by the gamma and epsilon chains, while a peripheral stalk is formed by the delta and b chains.

The protein resides in the cell membrane. It catalyses the reaction ATP + H2O + 4 H(+)(in) = ADP + phosphate + 5 H(+)(out). Functionally, produces ATP from ADP in the presence of a proton gradient across the membrane. The catalytic sites are hosted primarily by the beta subunits. The sequence is that of ATP synthase subunit beta from Mesomycoplasma hyopneumoniae (strain 232) (Mycoplasma hyopneumoniae).